A 511-amino-acid polypeptide reads, in one-letter code: MNQINKFIKNLYLIIITIILIIVISNDNNGLFINGQSLPDGFCPQPLIYRNSTNRKADIDNGYNFVGETNCLLPCPSPLFPKSQWESYFEMSLIMGSISMFASLFLIITYSPLINKKHTRHTVGILCMSIGIFFVMVSDGRQLWDIESPGEYKKYCPDTGRYARQSDTKCLTTGLFFQFGCVTAIGWWSILAVDLWMTIAKKVQTTKKQLLYYLIGINTVSLILTFGPVVKNQYGFGNAAIGCWMLDLKYQYGFFWIPVGICLSVGSVFIGLIFWEIYKISDAVKKRYLKKHIKPLCLIVLMCLEFLYMFIYYSYITANQPTYNKHVAEYIMCLIINAANVPGSYTCQLKTVSPTAQFLFLIAIRLMGLQGLIFYGLTAATKKVWANSWIYKDLLKLFKLFTTKLYNDSSSEEVENSNYSNNNSNYYSSNGYTTGGSDNGVGSGRSDKFTKSSSNGGAQDNNNNNNNNNNNNNNNNNNNNNNNNNSSSLEISGVESNNSTPRVNSPDNLQP.

Residues 1–25 (MNQINKFIKNLYLIIITIILIIVIS) form the signal peptide. Topologically, residues 26–93 (NDNNGLFING…QWESYFEMSL (68 aa)) are extracellular. N-linked (GlcNAc...) asparagine glycosylation occurs at Asn51. The chain crosses the membrane as a helical span at residues 94-114 (IMGSISMFASLFLIITYSPLI). Over 115–122 (NKKHTRHT) the chain is Cytoplasmic. Residues 123-143 (VGILCMSIGIFFVMVSDGRQL) traverse the membrane as a helical segment. The Extracellular portion of the chain corresponds to 144 to 172 (WDIESPGEYKKYCPDTGRYARQSDTKCLT). The helical transmembrane segment at 173 to 193 (TGLFFQFGCVTAIGWWSILAV) threads the bilayer. At 194–209 (DLWMTIAKKVQTTKKQ) the chain is on the cytoplasmic side. A helical transmembrane segment spans residues 210–230 (LLYYLIGINTVSLILTFGPVV). The Extracellular segment spans residues 231–253 (KNQYGFGNAAIGCWMLDLKYQYG). A helical membrane pass occupies residues 254–274 (FFWIPVGICLSVGSVFIGLIF). Residues 275-295 (WEIYKISDAVKKRYLKKHIKP) are Cytoplasmic-facing. A helical membrane pass occupies residues 296–316 (LCLIVLMCLEFLYMFIYYSYI). Topologically, residues 317–357 (TANQPTYNKHVAEYIMCLIINAANVPGSYTCQLKTVSPTAQ) are extracellular. The chain crosses the membrane as a helical span at residues 358–378 (FLFLIAIRLMGLQGLIFYGLT). The Cytoplasmic portion of the chain corresponds to 379 to 511 (AATKKVWANS…RVNSPDNLQP (133 aa)). The disordered stretch occupies residues 430–511 (NGYTTGGSDN…RVNSPDNLQP (82 aa)). A compositionally biased stretch (gly residues) spans 433 to 443 (TTGGSDNGVGS). A compositionally biased stretch (polar residues) spans 451-460 (KSSSNGGAQD). Over residues 461–485 (NNNNNNNNNNNNNNNNNNNNNNNNN) the composition is skewed to low complexity. A compositionally biased stretch (polar residues) spans 486–511 (SSSLEISGVESNNSTPRVNSPDNLQP).

The protein belongs to the G-protein coupled receptor Fz/Smo family.

Its subcellular location is the membrane. In Dictyostelium discoideum (Social amoeba), this protein is Frizzled/smoothened-like sans CRD protein C (fscC).